A 688-amino-acid chain; its full sequence is Complement C1s-1 subcomponent (688 aa).

The N-terminal stretch at 1-15 (MWCLVLFSLLASFSA) is a signal peptide. The CUB 1 domain occupies 16–130 (EPTMHGEILS…TGFAAYYTAI (115 aa)). Ca(2+) contacts are provided by Glu60, Asp68, Asp113, Asp131, Ile132, and Glu134. Cys65 and Cys83 are oxidised to a cystine. Positions 131-172 (DINECTDFTDVPCSHFCNNFIGGYFCSCPPEYFLHDDMRNCG) constitute an EGF-like; calcium-binding domain. 3 cysteine pairs are disulfide-bonded: Cys135–Cys147, Cys143–Cys156, and Cys158–Cys171. Asn149, Phe150, and Gly153 together coordinate Ca(2+). A (3R)-3-hydroxyasparagine modification is found at Asn149. Residue Asn174 is glycosylated (N-linked (GlcNAc...) asparagine). Cysteines 175 and 202 form a disulfide. The region spanning 175 to 290 (CSGDVFTALI…KGWKLRYHGD (116 aa)) is the CUB 2 domain. Ca(2+)-binding residues include Glu226, Asp236, Asp275, Gly278, and Gln279. Cysteines 234 and 251 form a disulfide. 2 Sushi domains span residues 292 to 356 (ISCA…KCQP) and 357 to 423 (VYCG…RCIP). Cystine bridges form between Cys294–Cys341, Cys321–Cys354, Cys359–Cys403, Cys386–Cys421, Cys425–Cys549, Cys595–Cys618, and Cys627–Cys659. The region spanning 438–680 (IFGGQPAKIE…YVDWILKTMQ (243 aa)) is the Peptidase S1 domain. Residues His475 and Asp529 each act as charge relay system in the active site. The Charge relay system role is filled by Ser631. The N-linked (GlcNAc...) asparagine glycan is linked to Asn641.

This sequence belongs to the peptidase S1 family. Core component of the complement C1 complex, a calcium-dependent complex composed of 1 molecule of the C1Q subcomplex, 2 molecules of C1R and 2 molecules of C1S. The C1Q subcomplex is composed 18 subunits: 3 chains of C1QA, C1QB, and C1QC trimerize to form 6 collagen-like triple helices connected to six globular ligand-recognition modules. Cleaved and activated by C1R to generate Complement C1s subcomponent heavy and light chains. Post-translationally, the iron and 2-oxoglutarate dependent 3-hydroxylation of aspartate and asparagine is (R) stereospecific within EGF domains. Predominantly expressed in liver.

It localises to the secreted. The protein resides in the cell surface. It carries out the reaction Cleavage of Arg-|-Ala bond in complement component C4 to form C4a and C4b, and Lys(or Arg)-|-Lys bond in complement component C2 to form C2a and C2b: the 'classical' pathway C3 convertase.. With respect to regulation, cleaved and activated by C1R. Immunoglobulin-binding promotes autoactivation of C1R, which results in the cleavage of the Arg-Ile bond in the catalytic domain. Inhibited by C1 inhibitor (SERPING1). Functionally, component of the complement C1 complex, a multiprotein complex that initiates the classical pathway of the complement system, a cascade of proteins that leads to phagocytosis and breakdown of pathogens and signaling that strengthens the adaptive immune system. C1S is activated following association of the C1 complex with immunoglobulins (IgG or IgM) complexed with antigens to form antigen-antibody complexes on the surface of pathogens. C1S is cleaved and activated by C1R to generate C1s subcomponent heavy and light chains. C1s subcomponent light chain then cleaves and activates C2 and C4, the next components of the classical complement pathway. Serine protease component of the complement C1 complex, which catalyzes cleavage and activation of C2 and C4, the next components of the classical complement pathway. Also cleaves IGFBP5 and thereby inhibits the trophic effects of IGF1. The chain is Complement C1s-1 subcomponent from Mus musculus (Mouse).